We begin with the raw amino-acid sequence, 2388 residues long: Hybrid signal transduction histidine kinase M (2388 aa).

Disordered stretches follow at residues 1-32 (MSNYLNANSTENNNNNNNNNNNNNNNINNNFN), 42-61 (FNTPPIGSNNNNNNNNNSIS), 69-111 (NECN…STPI), 123-209 (NRSN…NAYP), 237-337 (TLLN…SPKL), 361-421 (SPHG…YNDN), 430-449 (TRNTGYSSTGSIGNSSSSSF), and 486-542 (IYTP…NNNE). Positions 69 to 82 (NECNSGGEQSPKIK) are enriched in polar residues. Composition is skewed to low complexity over residues 83-110 (TNNNSYNTPVSSSTSTTGTNTTPMKSTP), 125-206 (SNLN…SNSN), and 242-288 (SSNN…NNGG). The segment covering 293 to 306 (QFISSDNKYNTVGN) has biased composition (polar residues). The segment covering 309-322 (HHHHHHQLHNHRHS) has biased composition (basic residues). 4 stretches are compositionally biased toward low complexity: residues 325-337 (QGSSSPIKSSPKL), 361-399 (SPHGSPFSSSSSSRKSSSSPSFLNQNNQNNPNNQNNQNN), 410-419 (NNSNDSFDYN), and 432-449 (NTGYSSTGSIGNSSSSSF). Residues 489–505 (PPYPQPYPQPPQLPPPS) are compositionally biased toward pro residues. Positions 506 to 541 (SSSSLSKENDNVDNNNTNNNNNNNNNNNNNNNNNNN) are enriched in low complexity. 4 consecutive transmembrane segments (helical) span residues 550–570 (TMNLIHISLLSVLAFYIFLMV), 589–609 (FILIFSFHFIFSSILMFLLVV), 645–665 (YIFLGLVLSGLVNILQVNLFF), and 679–699 (NISTAIEFLVVGIVLNFSHIP). Positions 732–888 (NNDNKNKIND…NNNEEDDEEE (157 aa)) are disordered. Positions 735-744 (NKNKINDKSD) are enriched in basic and acidic residues. Residues 745 to 880 (NSNSITNNNN…NNNNNNNNNN (136 aa)) are compositionally biased toward low complexity. A run of 3 helical transmembrane segments spans residues 896–916 (FQIFFTRIFLCLSITYTLIVL), 953–973 (VQFQAPLATLLHFIQLVLLLV), and 1025–1045 (CSVGFPIVGIILDIYSGWMSI). One can recognise a Histidine kinase domain in the interval 1093-1499 (RLVQNTGSII…VFELQVPMKC (407 aa)). Positions 1236–1257 (PIHHHRHHHRHHHHHHHHHHHH) are enriched in basic residues. The segment at 1236 to 1410 (PIHHHRHHHR…INNNINNNNN (175 aa)) is disordered. Residues 1260 to 1274 (DDDDYDDDNDDDNNT) are compositionally biased toward acidic residues. Residues 1286–1315 (LSDKIKDNQDENLELKKSNNDKIIENKENQ) show a composition bias toward basic and acidic residues. Over residues 1316–1410 (ENNNNNNNNN…INNNINNNNN (95 aa)) the composition is skewed to low complexity. In terms of domain architecture, Response regulatory 1 spans 1541–1656 (KILVIDDNPN…QLTVLSQLLP (116 aa)). D1592 is modified (4-aspartylphosphate). Disordered regions lie at residues 1666–1702 (SNQNLNNSGSSNGGGGGGGGGGGGGGGGGSGSSNIDF), 1960–2022 (GNNS…NSSN), 2036–2121 (CKGD…DIIN), 2133–2183 (QQQL…VKSS), and 2218–2256 (NQLNNNINNLNLNSNNNNNNNNNNNNNNNTNNDNNNNND). Residues 1676 to 1696 (SNGGGGGGGGGGGGGGGGGSG) show a composition bias toward gly residues. Residues 1974–1985 (TNNNTTTTTTTT) are compositionally biased toward low complexity. A compositionally biased stretch (polar residues) spans 1986-2010 (QPKKSPILTSSNGSDKSEGSTGSNR). A compositionally biased stretch (low complexity) spans 2054–2064 (DSSSSSSSSDS). A compositionally biased stretch (basic and acidic residues) spans 2065-2076 (HGQDDHSYRLED). 2 stretches are compositionally biased toward low complexity: residues 2078-2109 (SISSPSSQSPLLDLSGTSGTSGTTNLANSGIN) and 2133-2165 (QQQLQQQQQPQQQQPPGTPTISPSSSFPLLPIP). Residues 2169–2183 (INSSGASSGIKVKSS) show a composition bias toward polar residues. Positions 2262-2383 (NILLVEDNLV…LLISLLKKLV (122 aa)) constitute a Response regulatory 2 domain. D2313 is modified (4-aspartylphosphate).

Post-translationally, activation probably requires transfer of a phosphate group between a histidine in the kinase core (transmitter) domain and an aspartate of the receiver domain.

It localises to the membrane. It catalyses the reaction ATP + protein L-histidine = ADP + protein N-phospho-L-histidine.. Its function is as follows. Acts as a receptor histidine kinase for a signal transduction pathway. This protein undergoes an ATP-dependent autophosphorylation at a conserved histidine residue in the kinase core, and a phosphoryl group is then transferred to a conserved aspartate residue in the receiver domain. The sequence is that of Hybrid signal transduction histidine kinase M (dhkM) from Dictyostelium discoideum (Social amoeba).